The primary structure comprises 182 residues: MKHSEESRIRSTTVIGVLRDGKAALGSDGQMTLGNTVVKHSTRKIRSLYQGRLLAGFAGATADALTLLDRFEEKLEAYNGKLERAAVELARDWRTDKYLRRLEAMLAIVSSEKALIISGTGDVIEPEDGIVAIGSGSMYALAAARALMKHTGLHAGEIVQESLRTAADICIYTNDHIVVEEV.

T12 is a catalytic residue. A167, C170, and T173 together coordinate Na(+).

This sequence belongs to the peptidase T1B family. HslV subfamily. As to quaternary structure, a double ring-shaped homohexamer of HslV is capped on each side by a ring-shaped HslU homohexamer. The assembly of the HslU/HslV complex is dependent on binding of ATP.

It localises to the cytoplasm. The enzyme catalyses ATP-dependent cleavage of peptide bonds with broad specificity.. Its activity is regulated as follows. Allosterically activated by HslU binding. In terms of biological role, protease subunit of a proteasome-like degradation complex believed to be a general protein degrading machinery. The polypeptide is ATP-dependent protease subunit HslV (Chlorobium phaeovibrioides (strain DSM 265 / 1930) (Prosthecochloris vibrioformis (strain DSM 265))).